The chain runs to 410 residues: Peptidase T (410 aa).

Residue H79 coordinates Zn(2+). D81 is an active-site residue. D142 is a Zn(2+) binding site. The Proton acceptor role is filled by E176. Zn(2+)-binding residues include E177, D199, and H381.

It belongs to the peptidase M20B family. The cofactor is Zn(2+).

The protein resides in the cytoplasm. The enzyme catalyses Release of the N-terminal residue from a tripeptide.. Functionally, cleaves the N-terminal amino acid of tripeptides. The sequence is that of Peptidase T from Bacillus cereus (strain B4264).